The primary structure comprises 50 residues: Large ribosomal subunit protein eL39 (50 aa).

This sequence belongs to the eukaryotic ribosomal protein eL39 family.

This is Large ribosomal subunit protein eL39 from Methanosphaerula palustris (strain ATCC BAA-1556 / DSM 19958 / E1-9c).